The primary structure comprises 354 residues: UDP-N-acetylglucosamine--N-acetylmuramyl-(pentapeptide) pyrophosphoryl-undecaprenol N-acetylglucosamine transferase (354 aa).

UDP-N-acetyl-alpha-D-glucosamine is bound by residues 11-13, R164, S194, and Q289; that span reads TAG.

This sequence belongs to the glycosyltransferase 28 family. MurG subfamily.

It localises to the cell membrane. The enzyme catalyses di-trans,octa-cis-undecaprenyl diphospho-N-acetyl-alpha-D-muramoyl-L-alanyl-D-glutamyl-meso-2,6-diaminopimeloyl-D-alanyl-D-alanine + UDP-N-acetyl-alpha-D-glucosamine = di-trans,octa-cis-undecaprenyl diphospho-[N-acetyl-alpha-D-glucosaminyl-(1-&gt;4)]-N-acetyl-alpha-D-muramoyl-L-alanyl-D-glutamyl-meso-2,6-diaminopimeloyl-D-alanyl-D-alanine + UDP + H(+). Its pathway is cell wall biogenesis; peptidoglycan biosynthesis. Its function is as follows. Cell wall formation. Catalyzes the transfer of a GlcNAc subunit on undecaprenyl-pyrophosphoryl-MurNAc-pentapeptide (lipid intermediate I) to form undecaprenyl-pyrophosphoryl-MurNAc-(pentapeptide)GlcNAc (lipid intermediate II). The protein is UDP-N-acetylglucosamine--N-acetylmuramyl-(pentapeptide) pyrophosphoryl-undecaprenol N-acetylglucosamine transferase of Lachnospira eligens (strain ATCC 27750 / DSM 3376 / VPI C15-48 / C15-B4) (Eubacterium eligens).